The sequence spans 146 residues: Phospholipase A2 147 (146 aa).

The signal sequence occupies residues Met-1–Ala-19. Residues Ala-20–Leu-27 constitute a propeptide that is removed on maturation. 7 disulfide bridges follow: Cys-38–Cys-98, Cys-54–Cys-145, Cys-56–Cys-72, Cys-71–Cys-126, Cys-78–Cys-119, Cys-87–Cys-112, and Cys-105–Cys-117. Ca(2+) is bound by residues Tyr-55, Gly-57, and Gly-59. His-75 is an active-site residue. Asp-76 serves as a coordination point for Ca(2+). The active site involves Asp-120.

Belongs to the phospholipase A2 family. Group I subfamily. D49 sub-subfamily. The cofactor is Ca(2+). Expressed by the venom gland.

The protein localises to the secreted. It carries out the reaction a 1,2-diacyl-sn-glycero-3-phosphocholine + H2O = a 1-acyl-sn-glycero-3-phosphocholine + a fatty acid + H(+). Functionally, snake venom phospholipase A2 (PLA2) that inhibits collagen-induced platelet aggregation. PLA2 catalyzes the calcium-dependent hydrolysis of the 2-acyl groups in 3-sn-phosphoglycerides. In Drysdalia coronoides (White-lipped snake), this protein is Phospholipase A2 147.